A 155-amino-acid polypeptide reads, in one-letter code: MSKVLEQVEAIVAPITDELQLELVDIVFEKEGPNWFLRIFIDKDGGVDIDECAAVSEKVSEKMDENDPITQNYFLEVSSPGAERPLKKEQDFENAVSKYVHVTSYEPIDGRKMWEGTLVSYDGTTLVITITDKTRKITCEIPKDKVAKARLAIQF.

It belongs to the RimP family.

It localises to the cytoplasm. Functionally, required for maturation of 30S ribosomal subunits. The chain is Ribosome maturation factor RimP from Listeria monocytogenes serotype 4a (strain HCC23).